The chain runs to 218 residues: Probable GTP-binding protein EngB (218 aa).

Residues 44–218 form the EngB-type G domain; it reads DRIEVCFAGR…LRATIATIET (175 aa). GTP is bound by residues 52–59, 79–83, 97–100, 164–167, and 198–200; these read GRSNVGKS, GRTQE, DLPG, TKSD, and TSS. Mg(2+) contacts are provided by Ser59 and Thr81.

The protein belongs to the TRAFAC class TrmE-Era-EngA-EngB-Septin-like GTPase superfamily. EngB GTPase family. Mg(2+) is required as a cofactor.

In terms of biological role, necessary for normal cell division and for the maintenance of normal septation. The polypeptide is Probable GTP-binding protein EngB (Jannaschia sp. (strain CCS1)).